Consider the following 320-residue polypeptide: o-succinylbenzoate synthase (320 aa).

Lysine 133 serves as the catalytic Proton donor. Mg(2+) contacts are provided by aspartate 161, glutamate 190, and aspartate 213. Lysine 235 functions as the Proton acceptor in the catalytic mechanism.

It belongs to the mandelate racemase/muconate lactonizing enzyme family. MenC type 1 subfamily. The cofactor is a divalent metal cation.

The catalysed reaction is (1R,6R)-6-hydroxy-2-succinyl-cyclohexa-2,4-diene-1-carboxylate = 2-succinylbenzoate + H2O. The protein operates within quinol/quinone metabolism; 1,4-dihydroxy-2-naphthoate biosynthesis; 1,4-dihydroxy-2-naphthoate from chorismate: step 4/7. Its pathway is quinol/quinone metabolism; menaquinone biosynthesis. In terms of biological role, converts 2-succinyl-6-hydroxy-2,4-cyclohexadiene-1-carboxylate (SHCHC) to 2-succinylbenzoate (OSB). This Salmonella paratyphi B (strain ATCC BAA-1250 / SPB7) protein is o-succinylbenzoate synthase.